We begin with the raw amino-acid sequence, 92 residues long: MSSITRDGQPALRAGVRLQYDRARDQWVLLAPERVVELDEIALVVAQRYDGTRSLAQIAQELAAEFDADAADIEADVIELTATLQQKRLLRL.

It belongs to the PqqD family. As to quaternary structure, monomer. Interacts with PqqE.

The protein operates within cofactor biosynthesis; pyrroloquinoline quinone biosynthesis. Functionally, functions as a PqqA binding protein and presents PqqA to PqqE, in the pyrroloquinoline quinone (PQQ) biosynthetic pathway. The polypeptide is PqqA binding protein (Xanthomonas oryzae pv. oryzae (strain PXO99A)).